A 122-amino-acid polypeptide reads, in one-letter code: Large ribosomal subunit protein uL14 (122 aa).

This sequence belongs to the universal ribosomal protein uL14 family. As to quaternary structure, part of the 50S ribosomal subunit. Forms a cluster with proteins L3 and L19. In the 70S ribosome, L14 and L19 interact and together make contacts with the 16S rRNA in bridges B5 and B8.

Functionally, binds to 23S rRNA. Forms part of two intersubunit bridges in the 70S ribosome. This is Large ribosomal subunit protein uL14 from Granulibacter bethesdensis (strain ATCC BAA-1260 / CGDNIH1).